Consider the following 313-residue polypeptide: Aspartate carbamoyltransferase catalytic subunit (313 aa).

Carbamoyl phosphate is bound by residues R59 and T60. K87 is an L-aspartate binding site. 3 residues coordinate carbamoyl phosphate: R109, H137, and Q140. Residues R170 and R224 each contribute to the L-aspartate site. G265 and P266 together coordinate carbamoyl phosphate.

This sequence belongs to the aspartate/ornithine carbamoyltransferase superfamily. ATCase family. In terms of assembly, heterododecamer (2C3:3R2) of six catalytic PyrB chains organized as two trimers (C3), and six regulatory PyrI chains organized as three dimers (R2).

It catalyses the reaction carbamoyl phosphate + L-aspartate = N-carbamoyl-L-aspartate + phosphate + H(+). The protein operates within pyrimidine metabolism; UMP biosynthesis via de novo pathway; (S)-dihydroorotate from bicarbonate: step 2/3. In terms of biological role, catalyzes the condensation of carbamoyl phosphate and aspartate to form carbamoyl aspartate and inorganic phosphate, the committed step in the de novo pyrimidine nucleotide biosynthesis pathway. The sequence is that of Aspartate carbamoyltransferase catalytic subunit from Rhizobium meliloti (strain 1021) (Ensifer meliloti).